The following is an 86-amino-acid chain: Neurotoxin 3FTx-RK (86 aa).

The first 21 residues, methionine 1–threonine 21, serve as a signal peptide directing secretion. Cystine bridges form between cysteine 24/cysteine 45, cysteine 38/cysteine 63, cysteine 67/cysteine 78, and cysteine 79/cysteine 84.

As to expression, expressed by the venom gland.

It localises to the secreted. This Bungarus fasciatus (Banded krait) protein is Neurotoxin 3FTx-RK.